The chain runs to 93 residues: MPNKRQAAKRARRDERRREINALHVSRMKTAIRNFKKLIQAKDLETAKAKLPFVVSMIQHAAAKGSIHKNEAARRVSRVTQLLNKALASNEQK.

It belongs to the bacterial ribosomal protein bS20 family.

Its function is as follows. Binds directly to 16S ribosomal RNA. The sequence is that of Small ribosomal subunit protein bS20 from Hydrogenobaculum sp. (strain Y04AAS1).